The sequence spans 275 residues: 4-hydroxy-tetrahydrodipicolinate reductase (275 aa).

NAD(+) is bound by residues 8–13, 100–102, and 126–129; these read GATGRM, GTT, and SPNM. The Proton donor/acceptor role is filled by His-160. Residue His-161 participates in (S)-2,3,4,5-tetrahydrodipicolinate binding. The active-site Proton donor is Lys-164. 170 to 171 contributes to the (S)-2,3,4,5-tetrahydrodipicolinate binding site; it reads GT.

This sequence belongs to the DapB family.

It is found in the cytoplasm. It catalyses the reaction (S)-2,3,4,5-tetrahydrodipicolinate + NAD(+) + H2O = (2S,4S)-4-hydroxy-2,3,4,5-tetrahydrodipicolinate + NADH + H(+). It carries out the reaction (S)-2,3,4,5-tetrahydrodipicolinate + NADP(+) + H2O = (2S,4S)-4-hydroxy-2,3,4,5-tetrahydrodipicolinate + NADPH + H(+). It participates in amino-acid biosynthesis; L-lysine biosynthesis via DAP pathway; (S)-tetrahydrodipicolinate from L-aspartate: step 4/4. Functionally, catalyzes the conversion of 4-hydroxy-tetrahydrodipicolinate (HTPA) to tetrahydrodipicolinate. This chain is 4-hydroxy-tetrahydrodipicolinate reductase, found in Methanopyrus kandleri (strain AV19 / DSM 6324 / JCM 9639 / NBRC 100938).